A 920-amino-acid chain; its full sequence is MSDERITEKPPHQQPESEGEPVPEEEVEEETEEEVPDEQSSEDDDIDGLIDELQSQEAHEEAEEDDGPAAAGEARKIPEELLQTDPSVGLSSDEVVNRRKKYGLNQMREESENLLVKFLMFFIGPIQFVMEAAAVLAAGLEDWVDFGVICGLLFLNAGVGFIQEFQAGSIVEELKKTLANTATVIRDGSVQEAPANEIVPGDILKLEDGTVIPADGRLVTEECFLQVDQSSITGESLAVDKHYGDEVFSSSTVKRGEGFMIVTATGDNTFVGRAASLVNAAAGGQGHFTEVLNGIGVILLVLVVITLLLIWTACFYRTVRIVPILRYTLGITIVGVPVGLPAVVTTTMAGGAAYLAKKQAIVQKLSAIESLAGVEILCSDKTGTLTKNKLSLHEPYTVEGVSSDDLMLTACLAASRKKKGLDAIDKAFLKSLAQYPKAKGALTKYKVLEFHPFDPVSKKVTAVVESPEGERIICVKGAPLFVLKTVEEDHPIPEDVHENYENKVAELASRGFRALGVARKRGEGHWEILGVMPCMDPPRDDTAATVNEAKRLGLSVKMLTGDAVGIAKETCRQLGLGTNIYDAERLGLGGGGSMPGSEMYDFVENADGFAEVFPQHKFAVVDILQQRGYLVAMTGDGVNDAPSLKKADTGIAVEGATDAARSAADIVFLAPGLSAIIDALKTSRQIFHRMYAYVVYRIALSLHLEIFLGLWIAILNHSLDIDLIVFIAIFADVATLAIAYDNAPFSPSPVKWNLPRLWGMSIMMGIILAAGTWITLTTMFLPKGGIIQNFGSIDGILFLEISLTENWLIFITRAVGPFWSSIPSWQLAGAVFVVDVVATMFTLFGWWSQNWTDIVTVVRIYIWSIGIFCCLGGAYYLMSESETFDRLMNGKPLKENKSTRSVEDFLASMRRVSTQHEKGN.

The segment covering 1–11 (MSDERITEKPP) has biased composition (basic and acidic residues). Residues 1-71 (MSDERITEKP…AEEDDGPAAA (71 aa)) are disordered. Over 1–117 (MSDERITEKP…REESENLLVK (117 aa)) the chain is Cytoplasmic. Acidic residues predominate over residues 17–50 (SEGEPVPEEEVEEETEEEVPDEQSSEDDDIDGLI). Residues 118–138 (FLMFFIGPIQFVMEAAAVLAA) form a helical membrane-spanning segment. Topologically, residues 139 to 142 (GLED) are extracellular. A helical transmembrane segment spans residues 143–162 (WVDFGVICGLLFLNAGVGFI). Topologically, residues 163–293 (QEFQAGSIVE…GQGHFTEVLN (131 aa)) are cytoplasmic. The helical transmembrane segment at 294-315 (GIGVILLVLVVITLLLIWTACF) threads the bilayer. At 316-326 (YRTVRIVPILR) the chain is on the extracellular side. The helical transmembrane segment at 327–349 (YTLGITIVGVPVGLPAVVTTTMA) threads the bilayer. At 350-721 (GGAAYLAKKQ…IAILNHSLDI (372 aa)) the chain is on the cytoplasmic side. D380 functions as the 4-aspartylphosphate intermediate in the catalytic mechanism. Mg(2+) contacts are provided by D636 and D640. A helical transmembrane segment spans residues 722–740 (DLIVFIAIFADVATLAIAY). Residues 741–756 (DNAPFSPSPVKWNLPR) are Extracellular-facing. Residues 757–776 (LWGMSIMMGIILAAGTWITL) form a helical membrane-spanning segment. Over 777-826 (TTMFLPKGGIIQNFGSIDGILFLEISLTENWLIFITRAVGPFWSSIPSWQ) the chain is Cytoplasmic. The chain crosses the membrane as a helical span at residues 827–847 (LAGAVFVVDVVATMFTLFGWW). Topologically, residues 848 to 859 (SQNWTDIVTVVR) are extracellular. Residues 860 to 876 (IYIWSIGIFCCLGGAYY) traverse the membrane as a helical segment. Residues 877–920 (LMSESETFDRLMNGKPLKENKSTRSVEDFLASMRRVSTQHEKGN) lie on the Cytoplasmic side of the membrane.

This sequence belongs to the cation transport ATPase (P-type) (TC 3.A.3) family. Type IIIA subfamily.

It localises to the cell membrane. It carries out the reaction ATP + H2O + H(+)(in) = ADP + phosphate + 2 H(+)(out). Its function is as follows. The plasma membrane ATPase of plants and fungi is a hydrogen ion pump. The proton gradient it generates drives the active transport of nutrients by H(+)-symport. The resulting external acidification and/or internal alkinization may mediate growth responses. In Zygosaccharomyces rouxii, this protein is Plasma membrane ATPase.